The sequence spans 116 residues: Large ribosomal subunit protein bL17 (116 aa).

It belongs to the bacterial ribosomal protein bL17 family. In terms of assembly, part of the 50S ribosomal subunit. Contacts protein L32.

This chain is Large ribosomal subunit protein bL17, found in Crocosphaera subtropica (strain ATCC 51142 / BH68) (Cyanothece sp. (strain ATCC 51142)).